Consider the following 194-residue polypeptide: Ras-related protein Rab-22A (194 aa).

Position 12-20 (12-20 (GDTGVGKSS)) interacts with GTP. An Effector region motif is present at residues 34-42 (INPTIGASF). GTP-binding positions include 60 to 64 (DTAGQ), 118 to 121 (NKCD), and 148 to 150 (SAK). Residues 174 to 194 (PSGGKGFKLRRQPSEPKRSCC) are disordered. Positions 185–194 (QPSEPKRSCC) are enriched in basic and acidic residues. S-geranylgeranyl cysteine attachment occurs at residues C193 and C194.

The protein belongs to the small GTPase superfamily. Rab family. In terms of assembly, interacts directly with ZFYVE20. Binds EEA1. Interacts (in its GTP-bound form) with RABGEF1. Interacts (in its GTP-bound form) with RINL.

Its subcellular location is the endosome membrane. It localises to the cell membrane. The protein resides in the early endosome. It is found in the late endosome. The protein localises to the cell projection. Its subcellular location is the ruffle. It localises to the cytoplasmic vesicle. The protein resides in the phagosome. It is found in the phagosome membrane. Plays a role in endocytosis and intracellular protein transport. Mediates trafficking of TF from early endosomes to recycling endosomes. Required for NGF-mediated endocytosis of NTRK1, and subsequent neurite outgrowth. Binds GTP and GDP and has low GTPase activity. Alternates between a GTP-bound active form and a GDP-bound inactive form. This is Ras-related protein Rab-22A (RAB22A) from Homo sapiens (Human).